We begin with the raw amino-acid sequence, 450 residues long: Probable glucan endo-1,3-beta-glucosidase eglC (450 aa).

An N-terminal signal peptide occupies residues 1–18; it reads MQFTHLVALALALATSEA. The active-site Proton donor is Glu-128. A glycan (N-linked (GlcNAc...) asparagine) is linked at Asn-183. Residue Glu-239 is the Nucleophile of the active site. 2 N-linked (GlcNAc...) asparagine glycosylation sites follow: Asn-362 and Asn-368. Composition is skewed to low complexity over residues 377–395 and 405–420; these read SSAI…SGSS and ASGQ…SAPS. The segment at 377–420 is disordered; sequence SSAISGSSSGSAAGSSGSSGSSGSGASGASGQSSSSTGSSSAPS. Residue Asn-427 is the site of GPI-anchor amidated asparagine attachment. Residues 428–450 constitute a propeptide, removed in mature form; it reads AASGLSGSICGAVVAVCLALAAL.

This sequence belongs to the glycosyl hydrolase 17 family. The GPI-anchor is attached to the protein in the endoplasmic reticulum and serves to target the protein to the cell surface. There, the glucosamine-inositol phospholipid moiety is cleaved off and the GPI-modified mannoprotein is covalently attached via its lipidless GPI glycan remnant to the 1,6-beta-glucan of the outer cell wall layer.

Its subcellular location is the cell membrane. It localises to the secreted. The protein localises to the cell wall. It carries out the reaction Hydrolysis of (1-&gt;3)-beta-D-glucosidic linkages in (1-&gt;3)-beta-D-glucans.. Its function is as follows. Glucanases play a role in cell expansion during growth, in cell-cell fusion during mating, and in spore release during sporulation. This enzyme may be involved in beta-glucan degradation and also function biosynthetically as a transglycosylase. The protein is Probable glucan endo-1,3-beta-glucosidase eglC (eglC) of Aspergillus fumigatus (strain CBS 144.89 / FGSC A1163 / CEA10) (Neosartorya fumigata).